The sequence spans 221 residues: Octanoyltransferase (221 aa).

The 187-residue stretch at 35–221 (ESYENRIIFC…RELLAALLSK (187 aa)) folds into the BPL/LPL catalytic domain. Substrate contacts are provided by residues 80–87 (RGGDITYH), 152–154 (AIG), and 165–167 (GLA). Cys-183 serves as the catalytic Acyl-thioester intermediate.

Belongs to the LipB family.

It localises to the cytoplasm. The enzyme catalyses octanoyl-[ACP] + L-lysyl-[protein] = N(6)-octanoyl-L-lysyl-[protein] + holo-[ACP] + H(+). It functions in the pathway protein modification; protein lipoylation via endogenous pathway; protein N(6)-(lipoyl)lysine from octanoyl-[acyl-carrier-protein]: step 1/2. Catalyzes the transfer of endogenously produced octanoic acid from octanoyl-acyl-carrier-protein onto the lipoyl domains of lipoate-dependent enzymes. Lipoyl-ACP can also act as a substrate although octanoyl-ACP is likely to be the physiological substrate. This is Octanoyltransferase from Bacteroides fragilis (strain YCH46).